A 142-amino-acid polypeptide reads, in one-letter code: Large ribosomal subunit protein uL13 (142 aa).

Belongs to the universal ribosomal protein uL13 family. Part of the 50S ribosomal subunit.

In terms of biological role, this protein is one of the early assembly proteins of the 50S ribosomal subunit, although it is not seen to bind rRNA by itself. It is important during the early stages of 50S assembly. The chain is Large ribosomal subunit protein uL13 from Alkaliphilus metalliredigens (strain QYMF).